We begin with the raw amino-acid sequence, 113 residues long: Ferredoxin-1 (113 aa).

4Fe-4S ferredoxin-type domains are found at residues 2 to 30 (TYIV…YEGE) and 31 to 60 (NFLV…PDTE). [3Fe-4S] cluster-binding residues include Cys-9 and Cys-17. [4Fe-4S] cluster-binding residues include Cys-21, Cys-40, Cys-43, and Cys-46. Cys-50 is a [3Fe-4S] cluster binding site.

[4Fe-4S] cluster is required as a cofactor. It depends on [3Fe-4S] cluster as a cofactor.

In Caulobacter vibrioides (strain ATCC 19089 / CIP 103742 / CB 15) (Caulobacter crescentus), this protein is Ferredoxin-1 (fdxA).